The primary structure comprises 372 residues: Cyclin-dependent kinase 9 (372 aa).

Residues 19–315 (YEKLAKIGQG…SDDALNHDFF (297 aa)) form the Protein kinase domain. 25-33 (IGQGTFGEV) contacts ATP. An N6-acetyllysine; by EP300/CBP, PCAF/KAT2B and GCN5/KAT2A modification is found at Lys44. ATP is bound by residues Lys48 and 104-106 (DFC). Residue Lys48 is modified to N6-acetyllysine; by PCAF/KAT2B and GCN5/KAT2A. Asp149 serves as the catalytic Proton acceptor. A T-loop region spans residues 166–191 (ADFGLARAFSLAKNSQPNRYTNRVVT). An ATP-binding site is contributed by Asp167. Ser175 carries the post-translational modification Phosphoserine. A Phosphothreonine; by CaMK1D modification is found at Thr186. The disordered stretch occupies residues 343–372 (RRKGSQITQQSTNQSRNPATTNQTEFERVF). Ser347 carries the phosphoserine; by CDK9 and PKA modification. Over residues 347-366 (SQITQQSTNQSRNPATTNQT) the composition is skewed to polar residues. Thr350 carries the post-translational modification Phosphothreonine; by CDK9. Ser353 bears the Phosphoserine; by CDK9 mark. Thr354 carries the post-translational modification Phosphothreonine; by CDK9. Residue Ser357 is modified to Phosphoserine; by CDK9. 2 positions are modified to phosphothreonine; by CDK9: Thr362 and Thr363.

Belongs to the protein kinase superfamily. CMGC Ser/Thr protein kinase family. CDC2/CDKX subfamily. In terms of assembly, component of the super elongation complex (SEC), at least composed of EAF1, EAF2, CDK9, MLLT3/AF9, AFF (AFF1 or AFF4), the P-TEFb complex and ELL (ELL, ELL2 or ELL3). Associates with CCNT1/cyclin-T1, CCNT2/cyclin-T2 (isoform A and isoform B) or CCNK/cyclin-K to form active P-TEFb. P-TEFb forms a complex with AFF4/AF5Q31 and is part of the super elongation complex (SEC). Component of a complex which is composed of at least 5 members: HTATSF1/Tat-SF1, P-TEFb complex, RNA pol II, SUPT5H, and NCL/nucleolin. Associates with UBR5 and forms a transcription regulatory complex composed of CDK9, RNAP II, UBR5 and TFIIS/TCEA1 that can stimulate target gene transcription (e.g. gamma fibrinogen/FGG) by recruiting their promoters. Component of the 7SK snRNP inactive complex which is composed of at least 8 members: P-TEFb (composed of CDK9 and CCNT1/cyclin-T1), HEXIM1, HEXIM2, LARP7, BCDIN3, SART3 proteins and 7SK and U6 snRNAs. This inactive 7SK snRNP complex can also interact with NCOR1 and HDAC3, probably to regulate CDK9 acetylation. Release of P-TEFb from P-TEFb/7SK snRNP complex requires both PP2B to transduce calcium Ca(2+) signaling in response to stimuli (e.g. UV or hexamethylene bisacetamide (HMBA)), and PPP1CA to dephosphorylate Thr-186. This released P-TEFb remains inactive in the pre-initiation complex with BRD4 until new Thr-186 phosphorylation occurs after the synthesis of a short RNA. Interacts with BRD4; to target chromatin binding. Interacts with JMJD6. Interacts with activated nuclear STAT3 and RELA/p65. Binds to AR and MYOD1. Forms a complex composed of CDK9, CCNT1/cyclin-T1, EP300 and GATA4 that stimulates hypertrophy in cardiomyocytes. The large PER complex involved in the repression of transcriptional termination is composed of at least PER2, CDK9, DDX5, DHX9, NCBP1 and POLR2A (active). Interacts with HSF1. Interacts with TBX21. Interacts with WDR43. Interacts with ZMYND8; the association appears to occur between homodimeric ZMYND8 and the activated form of the P-TEFb complex. Autophosphorylation at Thr-186, Ser-347, Thr-350, Ser-353, Thr-354 and Ser-357 triggers kinase activity by promoting cyclin and substrate binding upon conformational changes. Thr-186 phosphorylation requires the calcium Ca(2+) signaling pathway, including CaMK1D and calmodulin. This inhibition is relieved by Thr-29 dephosphorylation. Phosphorylation at Ser-175 inhibits kinase activity. Can be phosphorylated on either Thr-362 or Thr-363 but not on both simultaneously. Post-translationally, dephosphorylation of Thr-186 by PPM1A and PPM1B blocks CDK9 activity and may lead to CDK9 proteasomal degradation. However, PPP1CA-mediated Thr-186 dephosphorylation is required to release P-TEFb from its inactive P-TEFb/7SK snRNP complex. Dephosphorylated at Ser-347 by the PNUTS-PP1 complex during RNA polymerase II transcription pause-release. Dephosphorylation of C-terminus Thr and Ser residues by protein phosphatase-1 (PP1) triggers CDK9 activity. In terms of processing, N6-acetylation of Lys-44 promotes kinase activity, whereas acetylation of both Lys-44 and Lys-48 mediated by PCAF/KAT2B and GCN5/KAT2A reduces kinase activity. The acetylated form associates with PML bodies in the nuclear matrix and with the transcriptionally silent HIV-1 genome; deacetylated upon transcription stimulation. Deacetylated by SIRT7, promoting the kinase activity and subsequent 'Ser-2' phosphorylation of the C-terminal domain (CTD) of RNA polymerase II. Polyubiquitinated and thus activated by UBR5. This ubiquitination is promoted by TFIIS/TCEA1 and favors 'Ser-2' phosphorylation of RPB1/POLR2A CTD. As to expression, expressed at high levels in brain and kidney.

The protein resides in the nucleus. It localises to the cytoplasm. The protein localises to the PML body. The enzyme catalyses L-seryl-[protein] + ATP = O-phospho-L-seryl-[protein] + ADP + H(+). It catalyses the reaction L-threonyl-[protein] + ATP = O-phospho-L-threonyl-[protein] + ADP + H(+). It carries out the reaction [DNA-directed RNA polymerase] + ATP = phospho-[DNA-directed RNA polymerase] + ADP + H(+). Activation by Thr-186 phosphorylation is calcium Ca(2+) signaling pathway-dependent; actively inactivated by dephosphorylation mediated by PPP1CA, PPM1A and PPM1B. Reversibly repressed by acetylation at Lys-44 and Lys-48. In terms of biological role, protein kinase involved in the regulation of transcription. Member of the cyclin-dependent kinase pair (CDK9/cyclin-T) complex, also called positive transcription elongation factor b (P-TEFb), which facilitates the transition from abortive to productive elongation by phosphorylating the CTD (C-terminal domain) of the large subunit of RNA polymerase II (RNAP II) POLR2A, SUPT5H and RDBP. This complex is inactive when in the 7SK snRNP complex form. Phosphorylates EP300, MYOD1, RPB1/POLR2A and AR and the negative elongation factors DSIF and NELFE. Regulates cytokine inducible transcription networks by facilitating promoter recognition of target transcription factors (e.g. TNF-inducible RELA/p65 activation and IL-6-inducible STAT3 signaling). Promotes RNA synthesis in genetic programs for cell growth, differentiation and viral pathogenesis. P-TEFb is also involved in cotranscriptional histone modification, mRNA processing and mRNA export. Modulates a complex network of chromatin modifications including histone H2B monoubiquitination (H2Bub1), H3 lysine 4 trimethylation (H3K4me3) and H3K36me3; integrates phosphorylation during transcription with chromatin modifications to control co-transcriptional histone mRNA processing. The CDK9/cyclin-K complex has also a kinase activity towards CTD of RNAP II and can substitute for CDK9/cyclin-T P-TEFb in vitro. Replication stress response protein; the CDK9/cyclin-K complex is required for genome integrity maintenance, by promoting cell cycle recovery from replication arrest and limiting single-stranded DNA amount in response to replication stress, thus reducing the breakdown of stalled replication forks and avoiding DNA damage. In addition, probable function in DNA repair of isoform 2 via interaction with KU70/XRCC6. Promotes cardiac myocyte enlargement. RPB1/POLR2A phosphorylation on 'Ser-2' in CTD activates transcription. AR phosphorylation modulates AR transcription factor promoter selectivity and cell growth. DSIF and NELF phosphorylation promotes transcription by inhibiting their negative effect. The phosphorylation of MYOD1 enhances its transcriptional activity and thus promotes muscle differentiation. Catalyzes phosphorylation of KAT5, promoting KAT5 recruitment to chromatin and histone acetyltransferase activity. The polypeptide is Cyclin-dependent kinase 9 (Cdk9) (Mus musculus (Mouse)).